Reading from the N-terminus, the 200-residue chain is Ubiquinol-cytochrome-c reductase complex assembly factor 1 (200 aa).

The protein belongs to the CBP3 family.

It localises to the mitochondrion inner membrane. In terms of biological role, required for the assembly of the ubiquinol-cytochrome c reductase complex (mitochondrial respiratory chain complex III or cytochrome b-c1 complex). May be involved in cytochrome b translation and/or stability. This chain is Ubiquinol-cytochrome-c reductase complex assembly factor 1 (uqcc1), found in Xenopus laevis (African clawed frog).